The sequence spans 487 residues: Malonate-semialdehyde dehydrogenase 2 (487 aa).

NAD(+)-binding residues include phenylalanine 154, lysine 178, glutamate 181, arginine 182, and serine 231. The active-site Nucleophile is the cysteine 286. An NAD(+)-binding site is contributed by glutamate 386.

This sequence belongs to the aldehyde dehydrogenase family. IolA subfamily. Homotetramer.

The enzyme catalyses 3-oxopropanoate + NAD(+) + CoA + H2O = hydrogencarbonate + acetyl-CoA + NADH + H(+). It catalyses the reaction 2-methyl-3-oxopropanoate + NAD(+) + CoA + H2O = propanoyl-CoA + hydrogencarbonate + NADH + H(+). Its pathway is polyol metabolism; myo-inositol degradation into acetyl-CoA; acetyl-CoA from myo-inositol: step 7/7. Catalyzes the oxidation of malonate semialdehyde (MSA) and methylmalonate semialdehyde (MMSA) into acetyl-CoA and propanoyl-CoA, respectively. Is involved in a myo-inositol catabolic pathway. Bicarbonate, and not CO2, is the end-product of the enzymatic reaction. The sequence is that of Malonate-semialdehyde dehydrogenase 2 from Bacillus thuringiensis (strain Al Hakam).